The chain runs to 390 residues: Alcohol dehydrogenase-like 7 (390 aa).

Positions 56, 58, 78, 108, 111, 114, 122, and 187 each coordinate Zn(2+). Residues S58 and H78 each contribute to the an alcohol site. S58 provides a ligand contact to NAD(+). Residues 212–217 (GLGSIG), D236, K241, 306–308 (LGV), F334, and R384 each bind NAD(+).

Belongs to the zinc-containing alcohol dehydrogenase family. Class-III subfamily. Homodimer. It depends on Zn(2+) as a cofactor.

Its subcellular location is the cytoplasm. The enzyme catalyses a primary alcohol + NAD(+) = an aldehyde + NADH + H(+). It carries out the reaction a secondary alcohol + NAD(+) = a ketone + NADH + H(+). The protein is Alcohol dehydrogenase-like 7 of Arabidopsis thaliana (Mouse-ear cress).